Here is a 148-residue protein sequence, read N- to C-terminus: uncharacterized protein (148 aa).

Residues 1–21 (MLQNYAIVLGMAVAVAIWYFF) traverse the membrane as a helical segment. Residues 27 to 61 (APPGPNPPKPDPPKPDPPKMHMPKKKPHWMDPHLT) form a disordered region.

The protein localises to the host membrane. This is an uncharacterized protein from Frog virus 3 (isolate Goorha) (FV-3).